The chain runs to 401 residues: Patatin-like protein 4 (401 aa).

The 202-residue stretch at 17-218 folds into the PNPLA domain; it reads LSLDGGGVRG…TANDPTLVGM (202 aa). The GXGXXG signature appears at 21-26; that stretch reads GGGVRG. A GXSXG motif is present at residues 60-64; it reads GTSTG. Catalysis depends on serine 62, which acts as the Nucleophile. The active-site Proton acceptor is aspartate 205. Positions 205–207 match the DGA/G motif; the sequence is DGG.

It belongs to the patatin family.

Its function is as follows. Possesses non-specific lipolytic acyl hydrolase (LAH) activity. Hydrolyzes phospholipids as well as galactolipids. May play a role in disease resistance. This chain is Patatin-like protein 4 (PLP4), found in Arabidopsis thaliana (Mouse-ear cress).